Here is a 178-residue protein sequence, read N- to C-terminus: Natriuretic and helokinestatin peptides (178 aa).

A signal peptide spans 1 to 25; the sequence is MNPRLACSTWLPLLLVLFTLDQGRA. Propeptides lie at residues 26–58, 69–73, 85–89, 103–112, and 123–146; these read NPVE…SEEN, ASDEN, ASEQKGPPFN, and AANE…RNKR. 2 disordered regions span residues 69-107 and 135-155; these read ASDE…SEQK and RSFE…GCFG. Cysteine 153 and cysteine 169 are oxidised to a cystine.

This sequence in the C-terminal section; belongs to the natriuretic peptide family. As to expression, expressed by the venom gland.

The protein resides in the secreted. Helokinestatins antagonize the vasodilatory actions of bradykinin at the B2 bradykinin receptor (BDKRB2), with helokinestatin-1 being the most potent antagonist. Its function is as follows. exhibits hypotensive and vasodepressor activities, possibly by targeting natriuretic peptide receptors NPR1 and NPR2. The polypeptide is Natriuretic and helokinestatin peptides (Heloderma suspectum cinctum (Banded Gila monster)).